An 883-amino-acid chain; its full sequence is Phosphoenolpyruvate carboxylase (883 aa).

Residues H138 and K546 contribute to the active site.

The protein belongs to the PEPCase type 1 family. Mg(2+) is required as a cofactor.

It carries out the reaction oxaloacetate + phosphate = phosphoenolpyruvate + hydrogencarbonate. In terms of biological role, forms oxaloacetate, a four-carbon dicarboxylic acid source for the tricarboxylic acid cycle. This chain is Phosphoenolpyruvate carboxylase, found in Escherichia coli O81 (strain ED1a).